The following is a 101-amino-acid chain: Ubiquitin-related modifier 1 homolog (101 aa).

Gly101 is modified (1-thioglycine). Gly101 participates in a covalent cross-link: Glycyl lysine isopeptide (Gly-Lys) (interchain with K-? in acceptor proteins).

It belongs to the URM1 family. Interacts with cer. C-terminal thiocarboxylation occurs in 2 steps, it is first acyl-adenylated (-COAMP) via the hesA/moeB/thiF part of the MOCS3 homolog, then thiocarboxylated (-COSH) via the rhodanese domain of the MOCS3 homolog.

It is found in the cytoplasm. The protein operates within tRNA modification; 5-methoxycarbonylmethyl-2-thiouridine-tRNA biosynthesis. Functionally, acts as a sulfur carrier required for 2-thiolation of mcm(5)S(2)U at tRNA wobble positions of cytosolic tRNA(Lys), tRNA(Glu) and tRNA(Gln). Serves as sulfur donor in tRNA 2-thiolation reaction by being thiocarboxylated (-COSH) at its C-terminus by MOCS3. The sulfur is then transferred to tRNA to form 2-thiolation of mcm(5)S(2)U. Also acts as a ubiquitin-like protein (UBL) that is covalently conjugated via an isopeptide bond to lysine residues of target proteins such as Prx2/Jafrac1, Ciao1, Eip71CD and GILT1. The thiocarboxylated form serves as substrate for conjugation and oxidative stress specifically induces the formation of UBL-protein conjugates. The chain is Ubiquitin-related modifier 1 homolog from Drosophila ananassae (Fruit fly).